The sequence spans 132 residues: Fluoride-specific ion channel FluC (132 aa).

4 consecutive transmembrane segments (helical) span residues Leu5–Val25, Thr32–Ala52, Phe70–Leu90, and Val105–Gly125. Residues Gly77 and Thr80 each contribute to the Na(+) site.

Belongs to the fluoride channel Fluc/FEX (TC 1.A.43) family.

The protein localises to the cell inner membrane. The catalysed reaction is fluoride(in) = fluoride(out). Na(+) is not transported, but it plays an essential structural role and its presence is essential for fluoride channel function. Its function is as follows. Fluoride-specific ion channel. Important for reducing fluoride concentration in the cell, thus reducing its toxicity. The sequence is that of Fluoride-specific ion channel FluC from Opitutus terrae (strain DSM 11246 / JCM 15787 / PB90-1).